The following is a 1025-amino-acid chain: Multidrug resistance protein MdtC (1025 aa).

12 helical membrane passes run 15–35 (ILISLAITLCGILGFRLLPVA), 333–353 (EVEQTLVISVALVILVVFLFL), 360–380 (LIPAVAVPVSLIGTFAAMYLC), 387–407 (LSLMALTIATGFVVDDAIVVL), 431–451 (VGFTVLSMSLSLVAVFLPLLL), 469–489 (VAIGISLAVSLTLTPMMCGWL), 528–548 (LTGLVVLGTIALSVWLYISIP), 851–871 (AQVILILAAIATVYIVLGVLY), 875–895 (VHPLTILSTLPSAGVGALLAL), 897–917 (IFDAPFSLIALIGIMLLIGIV), 953–973 (PIMMTTLAALFGALPLVLSGG), and 984–1004 (ITIVGGLVMSQLLTLYTTPVV).

Belongs to the resistance-nodulation-cell division (RND) (TC 2.A.6) family. MdtC subfamily. In terms of assembly, part of a tripartite efflux system composed of MdtA, MdtB and MdtC. MdtC forms a heteromultimer with MdtB.

Its subcellular location is the cell inner membrane. The sequence is that of Multidrug resistance protein MdtC from Klebsiella pneumoniae subsp. pneumoniae (strain ATCC 700721 / MGH 78578).